The sequence spans 422 residues: Serine--tRNA ligase (422 aa).

Residue 229–231 (TAE) participates in L-serine binding. Residue 260–262 (RAE) coordinates ATP. L-serine is bound at residue glutamate 283. 347–350 (EISS) serves as a coordination point for ATP. Position 383 (serine 383) interacts with L-serine.

It belongs to the class-II aminoacyl-tRNA synthetase family. Type-1 seryl-tRNA synthetase subfamily. Homodimer. The tRNA molecule binds across the dimer.

The protein localises to the cytoplasm. The enzyme catalyses tRNA(Ser) + L-serine + ATP = L-seryl-tRNA(Ser) + AMP + diphosphate + H(+). It catalyses the reaction tRNA(Sec) + L-serine + ATP = L-seryl-tRNA(Sec) + AMP + diphosphate + H(+). It participates in aminoacyl-tRNA biosynthesis; selenocysteinyl-tRNA(Sec) biosynthesis; L-seryl-tRNA(Sec) from L-serine and tRNA(Sec): step 1/1. Its function is as follows. Catalyzes the attachment of serine to tRNA(Ser). Is also able to aminoacylate tRNA(Sec) with serine, to form the misacylated tRNA L-seryl-tRNA(Sec), which will be further converted into selenocysteinyl-tRNA(Sec). This chain is Serine--tRNA ligase, found in Halothermothrix orenii (strain H 168 / OCM 544 / DSM 9562).